The primary structure comprises 207 residues: Protein FAM177A1 (207 aa).

Met-1 is modified (N-acetylmethionine). Residue Ser-65 is modified to Phosphoserine. Thr-66 is subject to Phosphothreonine. Residues 131-170 (IDEYYRMKKEEEEEEEENRMSEEAERQYQQNKLQADSIVQ) are a coiled coil. The segment at 142–176 (EEEEEENRMSEEAERQYQQNKLQADSIVQTDQPET) is disordered. Over residues 157–176 (QYQQNKLQADSIVQTDQPET) the composition is skewed to polar residues.

This sequence belongs to the FAM177 family.

In Mus musculus (Mouse), this protein is Protein FAM177A1 (Fam177a1).